A 216-amino-acid polypeptide reads, in one-letter code: Acyl-homoserine-lactone synthase (216 aa).

This sequence belongs to the autoinducer synthase family.

The enzyme catalyses a fatty acyl-[ACP] + S-adenosyl-L-methionine = an N-acyl-L-homoserine lactone + S-methyl-5'-thioadenosine + holo-[ACP] + H(+). Functionally, required for the synthesis of OHHL (N-(3-oxohexanoyl)-L-homoserine lactone), an autoinducer molecule which binds to a yet uncharacterized transcriptional regulator. In Enterobacter agglomerans (Erwinia herbicola), this protein is Acyl-homoserine-lactone synthase (eagI).